The sequence spans 74 residues: Large ribosomal subunit protein uL29 (74 aa).

It belongs to the universal ribosomal protein uL29 family.

This is Large ribosomal subunit protein uL29 from Cyanothece sp. (strain PCC 7425 / ATCC 29141).